The following is an 878-amino-acid chain: Alanine--tRNA ligase (878 aa).

Zn(2+)-binding residues include His-567, His-571, Cys-669, and His-673.

The protein belongs to the class-II aminoacyl-tRNA synthetase family. Zn(2+) serves as cofactor.

It is found in the cytoplasm. It carries out the reaction tRNA(Ala) + L-alanine + ATP = L-alanyl-tRNA(Ala) + AMP + diphosphate. Catalyzes the attachment of alanine to tRNA(Ala) in a two-step reaction: alanine is first activated by ATP to form Ala-AMP and then transferred to the acceptor end of tRNA(Ala). Also edits incorrectly charged Ser-tRNA(Ala) and Gly-tRNA(Ala) via its editing domain. The polypeptide is Alanine--tRNA ligase (Rickettsia canadensis (strain McKiel)).